A 546-amino-acid chain; its full sequence is MDDFPSPEPTDPRLEAMAQKVLEETIITEGDGTIYWALKVTRLLSRVAKKHQCFEAFYDAVIKGDPKTRCCPAHNEKLIGNFGRAIMCVLRAFRFPVIRYESQVKSILTCRHAFNSHSRNVCLNPYHYRWVELPTCQVPPIIVNKELDYGEPPIRTEDALDDWNQKDLKEEQVVASWDVPNVTMRGDEIKLLYDRYAAENGDFQYMNYGNFGSFDGSPCSSTTMSLGSSFASLLQQSNRQDDEEPGYYRSGLSSPASHAASPREFIPNGNDTISLDQEMMDDSEVSDIMHSENFSSENNGNRKPTYADGRPITPIEPRPLYRSSALELGDLSRQAGIYECVEYEESPSWLKLIYYEEGTMIGEKADVEGHHCLIDGFTASRTDSETRSRFSLGWYNNPNRSPQTAEVRGLIGKGVRFYLLAGEVYVENLCNIPVFVQSIGANMKNGFQLNTVSKLPPTGTMKVFDMRLFSKQLRTAAEKTYQDVYCLSRMCTVRVSFCKGWGEHYRRSTVLRSPVWFQAHLNNPMHWVDSVLTCMGAPPRICSSRT.

The MH1 domain occupies Ala16–Gln137. Disordered regions lie at residues Leu234 to Asn268 and Glu292 to Pro317. Residues Glu292–Arg302 are compositionally biased toward polar residues. Residues Trp349 to Thr546 form the MH2 domain.

This sequence belongs to the dwarfin/SMAD family. In terms of assembly, homodimer. Interacts with R-SMAD daf-14 and co-SMAD daf-3. Interacts with orphan nuclear receptor nhr-69. Expressed in the excretory cell and gonadal distal tip cells (DTCs).

Its subcellular location is the cytoplasm. The protein resides in the nucleus. Probably a receptor-regulated SMAD (R-SMAD) that is an intracellular signal transducer and transcriptional modulator activated by TGF-beta-like daf-7 signaling. Plays a role in TGF-beta-like daf-7 signaling in regulating entry into a developmentally arrested larval state known as dauer, in response to harsh environmental conditions; partially redundant with R-SMAD daf-14. Plays a role in inhibiting mitosis and promoting a switch to meiosis in the germ line, perhaps by down-regulating lag-2 transcription in the gonadal distal tip cells (DTCs). In cooperation with orphan nuclear receptor nhr-69 modulates the Insulin/IGF-1-like signaling (IIS) pathway, perhaps by regulating expression of the potassium channel exp-2, which in turn modulates the secretion of the insulin-like peptide daf-28. This chain is Smad protein daf-8, found in Caenorhabditis elegans.